A 65-amino-acid chain; its full sequence is Weak toxin CM-11 (65 aa).

Intrachain disulfides connect Cys-3/Cys-24, Cys-6/Cys-11, Cys-17/Cys-42, Cys-46/Cys-57, and Cys-58/Cys-63.

It belongs to the three-finger toxin family. Ancestral subfamily. Orphan group II sub-subfamily. In terms of tissue distribution, expressed by the venom gland.

It localises to the secreted. Functionally, binds with low affinity to muscular (alpha-1-beta-1-delta-epsilon/CHRNA1-CHRNB1-CHRND-CHRNE) and very low affinity to neuronal (alpha-7/CHRNA7) nicotinic acetylcholine receptor (nAChR). This Naja haje haje (Egyptian cobra) protein is Weak toxin CM-11.